Here is a 343-residue protein sequence, read N- to C-terminus: Hydroxycarboxylic acid receptor 1 (343 aa).

Residues 1–21 (MDNGSCCLIEGEPISQVMPPL) lie on the Extracellular side of the membrane. N-linked (GlcNAc...) asparagine glycosylation is present at Asn-3. A helical transmembrane segment spans residues 22-42 (LILVFVLGALGNGIALCGFCF). Topologically, residues 43–49 (HMKTWKS) are cytoplasmic. The chain crosses the membrane as a helical span at residues 50–70 (STIYLFNLAVADFLLMICLPL). Topologically, residues 71 to 90 (RTDYYLRRRHWIFGDIACRL) are extracellular. Residues Cys-88 and Cys-165 are joined by a disulfide bond. A helical membrane pass occupies residues 91–111 (VLFKLAMNRAGSIVFLTVVAV). At 112–131 (DRYFKVVHPHHMVNAISNRT) the chain is on the cytoplasmic side. The helical transmembrane segment at 132–152 (AAATACVLWTLVILGTVYLLM) threads the bilayer. At 153–182 (ESHLCVQGTLSSCESFIMESANGWHDVMFQ) the chain is on the extracellular side. Residues 183 to 203 (LEFFLPLTIILFCSVNVVWSL) form a helical membrane-spanning segment. Over 204 to 220 (RRRQQLTRQARMRRATR) the chain is Cytoplasmic. Residues 221–241 (FIMVVASVFITCYLPSVLARL) traverse the membrane as a helical segment. The Extracellular portion of the chain corresponds to 242–259 (YFLWTVPTSACDPSVHTA). The chain crosses the membrane as a helical span at residues 260-280 (LHVTLSFTYLNSMLDPLVYYF). Residues 281–343 (SSPSLPKFYT…SDGQWDLQVC (63 aa)) lie on the Cytoplasmic side of the membrane. Residues 319 to 334 (CSKSSIDGANRSQRPS) are compositionally biased toward polar residues. The segment at 319-343 (CSKSSIDGANRSQRPSDGQWDLQVC) is disordered.

It belongs to the G-protein coupled receptor 1 family. Highly expressed in subcutaneous fat and omental fat and detectable in lower levels in brain and many other tissues. High levels detected in epididymal and subcutaneous fat with slightly lower in omental fat, low levels are detected in the brain, skeletal muscle, kidney, liver and the pancreas (at protein level).

It is found in the cell membrane. Acts as a receptor for L-lactate and mediates its anti-lipolytic effect through a G(i)-protein-mediated pathway. This chain is Hydroxycarboxylic acid receptor 1 (Hcar1), found in Mus musculus (Mouse).